The primary structure comprises 307 residues: MDKRALKERLSRVGRVAVLAGGRSAERAVSLKSGAAVHAGLRNLGLLAELVDPADKSVDTLRGFDAAFIALHGRGGEDGVIQGVLEHLEIPYTGSGVMASAIGMDKVRTKQLWKGAGLPTPAFYVAGREEAELGFPVIVKPAHEGSSIGMAKADNTEELGEALVAAEKFDQDVLVEAWVNGPEYTVAVLGDEALPAIRLQTPHVFYDFEAKYQSDSTEYLCPAGLDDADEQALRTLALTAFRVAGCRGWGRVDVMRDEQGQWQLLEVNTVPGMTDHSLVPMAAKATGRDFDVLVGEILLDALERGRG.

The 190-residue stretch at 110–299 (KQLWKGAGLP…FDVLVGEILL (190 aa)) folds into the ATP-grasp domain. Residue 136–185 (PVIVKPAHEGSSIGMAKADNTEELGEALVAAEKFDQDVLVEAWVNGPEYT) participates in ATP binding. Positions 253, 266, and 268 each coordinate Mg(2+).

It belongs to the D-alanine--D-alanine ligase family. It depends on Mg(2+) as a cofactor. Mn(2+) serves as cofactor.

It is found in the cytoplasm. The catalysed reaction is 2 D-alanine + ATP = D-alanyl-D-alanine + ADP + phosphate + H(+). Its pathway is cell wall biogenesis; peptidoglycan biosynthesis. Functionally, cell wall formation. The sequence is that of D-alanine--D-alanine ligase from Alcanivorax borkumensis (strain ATCC 700651 / DSM 11573 / NCIMB 13689 / SK2).